Reading from the N-terminus, the 512-residue chain is Glutathione-binding protein GsiB (512 aa).

The first 26 residues, 1 to 26 (MTQFITHKWLAALGLASSIAAFPALA), serve as a signal peptide directing secretion.

Belongs to the bacterial solute-binding protein 5 family. In terms of assembly, the complex is composed of two ATP-binding proteins (GsiA), two transmembrane proteins (GsiC and GsiD) and a solute-binding protein (GsiB).

Its subcellular location is the periplasm. Part of the ABC transporter complex GsiABCD involved in glutathione import. Binds glutathione. This Salmonella choleraesuis (strain SC-B67) protein is Glutathione-binding protein GsiB.